The following is a 256-amino-acid chain: NAD-dependent protein deacetylase (256 aa).

Positions 1–254 (MDISYHEKIS…KDILDVIKSE (254 aa)) constitute a Deacetylase sirtuin-type domain. The NAD(+) site is built by A28, T32, F39, R40, Q105, I107, D108, and H123. Position 39 (F39) interacts with nicotinamide. I107 and D108 together coordinate nicotinamide. Catalysis depends on H123, which acts as the Proton acceptor. Residues C131, C134, C156, and C159 each contribute to the Zn(2+) site. Positions 197, 198, and 222 each coordinate NAD(+).

This sequence belongs to the sirtuin family. Class U subfamily. Requires Zn(2+) as cofactor.

Its subcellular location is the cytoplasm. It carries out the reaction N(6)-acetyl-L-lysyl-[protein] + NAD(+) + H2O = 2''-O-acetyl-ADP-D-ribose + nicotinamide + L-lysyl-[protein]. NAD-dependent protein deacetylase which modulates the activities of several enzymes which are inactive in their acetylated form. The sequence is that of NAD-dependent protein deacetylase from Thermodesulfovibrio yellowstonii (strain ATCC 51303 / DSM 11347 / YP87).